The following is a 515-amino-acid chain: Maturase K (515 aa).

The protein belongs to the intron maturase 2 family. MatK subfamily.

The protein resides in the plastid. Its subcellular location is the chloroplast. Functionally, usually encoded in the trnK tRNA gene intron. Probably assists in splicing its own and other chloroplast group II introns. This Pinus coulteri (Coulter pine) protein is Maturase K.